We begin with the raw amino-acid sequence, 452 residues long: Bifunctional protein GlmU (452 aa).

A pyrophosphorylase region spans residues 1-226 (MNFSAVILAA…PIEVEGVNDR (226 aa)). UDP-N-acetyl-alpha-D-glucosamine-binding positions include 8–11 (LAAG), Lys22, Gln73, 78–79 (GT), 100–102 (YGD), Gly137, Glu151, Asn166, and Asn224. Mg(2+) is bound at residue Asp102. Asn224 is a Mg(2+) binding site. A linker region spans residues 227–247 (AQLARLERAYQAAQAQKLLEQ). The tract at residues 248–452 (GVMLRDPSRF…IANWQRPTKK (205 aa)) is N-acetyltransferase. 2 residues coordinate UDP-N-acetyl-alpha-D-glucosamine: Arg330 and Lys348. Residue His360 is the Proton acceptor of the active site. UDP-N-acetyl-alpha-D-glucosamine contacts are provided by Tyr363 and Asn374. Acetyl-CoA contacts are provided by residues Ala377, 383 to 384 (NY), Ser402, Ala420, and Arg437.

In the N-terminal section; belongs to the N-acetylglucosamine-1-phosphate uridyltransferase family. This sequence in the C-terminal section; belongs to the transferase hexapeptide repeat family. Homotrimer. Mg(2+) is required as a cofactor.

Its subcellular location is the cytoplasm. It catalyses the reaction alpha-D-glucosamine 1-phosphate + acetyl-CoA = N-acetyl-alpha-D-glucosamine 1-phosphate + CoA + H(+). The catalysed reaction is N-acetyl-alpha-D-glucosamine 1-phosphate + UTP + H(+) = UDP-N-acetyl-alpha-D-glucosamine + diphosphate. It functions in the pathway nucleotide-sugar biosynthesis; UDP-N-acetyl-alpha-D-glucosamine biosynthesis; N-acetyl-alpha-D-glucosamine 1-phosphate from alpha-D-glucosamine 6-phosphate (route II): step 2/2. The protein operates within nucleotide-sugar biosynthesis; UDP-N-acetyl-alpha-D-glucosamine biosynthesis; UDP-N-acetyl-alpha-D-glucosamine from N-acetyl-alpha-D-glucosamine 1-phosphate: step 1/1. Its pathway is bacterial outer membrane biogenesis; LPS lipid A biosynthesis. Its function is as follows. Catalyzes the last two sequential reactions in the de novo biosynthetic pathway for UDP-N-acetylglucosamine (UDP-GlcNAc). The C-terminal domain catalyzes the transfer of acetyl group from acetyl coenzyme A to glucosamine-1-phosphate (GlcN-1-P) to produce N-acetylglucosamine-1-phosphate (GlcNAc-1-P), which is converted into UDP-GlcNAc by the transfer of uridine 5-monophosphate (from uridine 5-triphosphate), a reaction catalyzed by the N-terminal domain. This is Bifunctional protein GlmU from Aliivibrio fischeri (strain MJ11) (Vibrio fischeri).